Here is a 108-residue protein sequence, read N- to C-terminus: UPF0060 membrane protein Sca_1835 (108 aa).

The next 4 helical transmembrane spans lie at 5–25, 34–54, 60–80, and 84–104; these read ILIF…IWLW, FGLL…FQVF, VYAA…YVFD, and PDKY…IMLL.

Belongs to the UPF0060 family.

It is found in the cell membrane. The sequence is that of UPF0060 membrane protein Sca_1835 from Staphylococcus carnosus (strain TM300).